The sequence spans 151 residues: Large-conductance mechanosensitive channel (151 aa).

The next 2 membrane-spanning stretches (helical) occupy residues 19-39 and 85-105; these read VGII…GDVL and GLFI…FFLV.

It belongs to the MscL family. In terms of assembly, homopentamer.

The protein localises to the cell inner membrane. Functionally, channel that opens in response to stretch forces in the membrane lipid bilayer. May participate in the regulation of osmotic pressure changes within the cell. The chain is Large-conductance mechanosensitive channel from Chlorobaculum parvum (strain DSM 263 / NCIMB 8327) (Chlorobium vibrioforme subsp. thiosulfatophilum).